A 154-amino-acid polypeptide reads, in one-letter code: MSEKKQLQVEAICNGSVIDHIPAGQGIKILKLFHLLDTRQRITVGLNLPSAALGSKDLIKVENTQLTADQANQLALFAPQATVNIIEDFKVVTKHQLELPGEIVGVFACPNSNCISHREPVRSRFGVRSTQGEVRLKCHYCEKSFTKEIVSEAF.

Residues Cys109, Cys114, Cys138, and Cys141 each contribute to the Zn(2+) site.

The protein belongs to the PyrI family. As to quaternary structure, contains catalytic and regulatory chains. Zn(2+) is required as a cofactor.

Functionally, involved in allosteric regulation of aspartate carbamoyltransferase. The protein is Aspartate carbamoyltransferase regulatory chain of Tolumonas auensis (strain DSM 9187 / NBRC 110442 / TA 4).